The sequence spans 114 residues: Large ribosomal subunit protein uL24 (114 aa).

Belongs to the universal ribosomal protein uL24 family. In terms of assembly, part of the 50S ribosomal subunit.

In terms of biological role, one of two assembly initiator proteins, it binds directly to the 5'-end of the 23S rRNA, where it nucleates assembly of the 50S subunit. Functionally, one of the proteins that surrounds the polypeptide exit tunnel on the outside of the subunit. The chain is Large ribosomal subunit protein uL24 from Thermomicrobium roseum (strain ATCC 27502 / DSM 5159 / P-2).